We begin with the raw amino-acid sequence, 99 residues long: Putative membrane protein insertion efficiency factor (99 aa).

It belongs to the UPF0161 family.

The protein localises to the cell inner membrane. Its function is as follows. Could be involved in insertion of integral membrane proteins into the membrane. In Salinibacter ruber (strain DSM 13855 / M31), this protein is Putative membrane protein insertion efficiency factor.